We begin with the raw amino-acid sequence, 248 residues long: 5'-nucleotidase SurE (248 aa).

Residues D8, D9, S39, and N91 each contribute to the a divalent metal cation site.

It belongs to the SurE nucleotidase family. A divalent metal cation is required as a cofactor.

Its subcellular location is the cytoplasm. The enzyme catalyses a ribonucleoside 5'-phosphate + H2O = a ribonucleoside + phosphate. In terms of biological role, nucleotidase that shows phosphatase activity on nucleoside 5'-monophosphates. The protein is 5'-nucleotidase SurE of Shewanella amazonensis (strain ATCC BAA-1098 / SB2B).